The following is a 625-amino-acid chain: MQVPSPSAREAASMYGTAVAVFLVLLVAVLQGLAPPESPLPYRIPLDPKGDLELSWDVSYTQKTIYFQLLVQELKAGVLFGMSDRGELENADLVVLWTDGDNAYFGDAWSDQRGQIHLDSQQDYQLLRAQRTPKGLCLLFKRPFGTCDPKDYFIEDGTVHLVYGVLEEPFGSLEAINTSGLQKGLQRVQLLKPKISIPALPEDRRTMDIQAHNVLIPSKTTYWCHLTKLPQDFPRHHIVMYEPIITKGNEALVHHIEIFQCTNQFQNITSFSGSCDSKEKPQELKVCRHVLAAWALGARAFYYPEEAGLAFGGSNSSRFLLLEIHYHNPTNIRGRYDNSGIRLHYTAKLRHFNAGIMELGLVYTPVMAIPPKESAFVLTGYCTAKCTQAALPPLGIRIFASQLHTHLTGTKVVTMLVRDGQEIEIVNRDDHYSPNFQEIRMLKKTVYVYPGDVLITSCTYNTEDKNEATVGGLGTQEEMCVNYIHYYPQTQLELCKSHIDPCFLQKYFHLVNRSNLGEYCTCPQASGTTCPQASGTTCPRASVPEQFASVPWNSFSRVVLKALYDFIPVTVHCNKSSAVRFPGKWDLQPLPEIISKLKEPTPRCPTSRDQSSSSLTVVNIGGGKV.

Residues 1-9 (MQVPSPSAR) lie on the Cytoplasmic side of the membrane. Residues 10 to 30 (EAASMYGTAVAVFLVLLVAVL) form a helical; Signal-anchor for type II membrane protein membrane-spanning segment. The Intragranular portion of the chain corresponds to 31-625 (QGLAPPESPL…TVVNIGGGKV (595 aa)). A DOMON domain is found at 50-166 (GDLELSWDVS…GTVHLVYGVL (117 aa)). Disulfide bonds link C147/C604, C224/C275, C261/C287, C382/C495, C386/C573, and C458/C480. A glycan (N-linked (GlcNAc...) asparagine) is linked at N177. Y222 is an active-site residue. 2 residues coordinate Cu(2+): H254 and H255. N315 is a glycosylation site (N-linked (GlcNAc...) asparagine). Residues H325, H404, H406, and M479 each contribute to the Cu(2+) site. The active site involves H404. A glycan (N-linked (GlcNAc...) asparagine) is linked at N574.

It belongs to the copper type II ascorbate-dependent monooxygenase family. Homotetramer; composed of two disulfide-linked dimers. Cu(2+) is required as a cofactor. Proteolytic cleavage after the membrane-anchor leads to the release of the soluble form. Post-translationally, N-glycosylated.

The protein resides in the cytoplasmic vesicle. Its subcellular location is the secretory vesicle lumen. The protein localises to the secretory vesicle. It is found in the chromaffin granule lumen. It localises to the secreted. The protein resides in the secretory vesicle membrane. Its subcellular location is the chromaffin granule membrane. The catalysed reaction is dopamine + 2 L-ascorbate + O2 = (R)-noradrenaline + 2 monodehydro-L-ascorbate radical + H2O. The protein operates within catecholamine biosynthesis; (R)-noradrenaline biosynthesis; (R)-noradrenaline from dopamine: step 1/1. Its function is as follows. Catalyzes the hydroxylation of dopamine to noradrenaline (also known as norepinephrine), and is thus vital for regulation of these neurotransmitters. The sequence is that of Dopamine beta-hydroxylase (DBH) from Canis lupus familiaris (Dog).